Reading from the N-terminus, the 289-residue chain is Xylosylprotein 4-beta-galactosyltransferase (289 aa).

Topologically, residues 1-6 (MKLKTR) are cytoplasmic. A helical; Signal-anchor for type II membrane protein membrane pass occupies residues 7–27 (LILSGTILISLAACYFLVLLV). Residues 28–289 (LDLEITRDLM…DLNWTPYCKS (262 aa)) are Lumenal-facing. 58–62 (PYRDR) provides a ligand contact to UDP-alpha-D-galactose. N-linked (GlcNAc...) asparagine glycans are attached at residues Asn81 and Asn90. UDP-alpha-D-galactose contacts are provided by residues 97–99 (FNR), 123–124 (VD), Tyr154, and Trp184. Mn(2+) is bound at residue Asp124. 186–189 (LEDD) serves as a coordination point for N-acetyl-D-glucosamine. N-linked (GlcNAc...) asparagine glycosylation is present at Asn201. The segment at 214 to 236 (NTFRHIHGPKRKRDYTPKKNDKN) is disordered. The span at 217–226 (RHIHGPKRKR) shows a compositional bias: basic residues. A Mn(2+)-binding site is contributed by His218. Residue 218 to 220 (HIH) coordinates UDP-alpha-D-galactose. The span at 227-236 (DYTPKKNDKN) shows a compositional bias: basic and acidic residues.

Belongs to the glycosyltransferase 7 family. Mn(2+) is required as a cofactor.

The protein resides in the membrane. The catalysed reaction is 3-O-(beta-D-xylosyl)-L-seryl-[protein] + UDP-alpha-D-galactose = 3-O-(beta-D-galactosyl-(1-&gt;4)-beta-D-xylosyl)-L-seryl-[protein] + UDP + H(+). Its pathway is protein modification; protein glycosylation. Functionally, glycosyltransferase required for the biosynthesis of the tetrasaccharide (GlcA-Gal-Gal-Xyl-)Ser core linker of heparan sulfate and chondroitin sulfate. Required for embryonic development. Involved in vulval epithelium invagination. Required for axon regeneration after injury. In Caenorhabditis elegans, this protein is Xylosylprotein 4-beta-galactosyltransferase (sqv-3).